An 813-amino-acid polypeptide reads, in one-letter code: MLDTEPVDMIPLITPEEEAEMDKEEFPSVLPILPVRNIVLFPGVVLPITVGRQKSIRLVKKFYKGDRTIGVVAQENQKSEEPSFQDIFKVGTVAKILRMFVLPDGNTTIIIQGKRRFKIEEQVQDEPFMQAKVSMLKDIHPDMSKKEVKALLQSVKESATKILKMNPEIPQDAQIAINNIESENFLTHFLSSNINAELKDKQKLLEFDDAVERATWLLQLMDKDIQMLEIKREIHTKVHTDIDQQQRDYFLRQQIKVLQDELGDFSSEQEFERLKEKALTKKWSDKVRAHFDKEMSKLQRVNPMAPDYPVTFNYLELLVDLPWGENSTDNFDLVRAKEILDEDHFGLTKVKQRILEYLAVLKLKNNMKAPILCLYGPPGVGKTSLGKSIAKALDRKYIRMSLGGVHDESEIRGHRKTYIGAMPGKIIQGIKRSETSNPVFILDEIDKISKDFRGDPSSALLEVLDPEQNSSFMDNFLEVEYDLSKVLFIATSNALDTIQPALRDRMEIIEINGYTLEEKIQIAKKYLIPKQKEEHGLKAKDISFTDAAIVKIIEDYTRESGVRNLERKIGAVVRNIAVAIAMETAYTKKIQPAQVREILGSEDFEKDTYQQDDLAGIVTGLAWTPYGGEILTIESIISKGKGKLTLSGQLGDVMKESASAALSLLRANVDAIGIDHRVFDHFDLHVHVPAGATPKDGPSAGIALYTSLASTFTQRKIKPALAMTGEITLRGKVLPVGGIKEKILAAKRAGIKEIILSKKNKKDIEEIHPPDIADLKFHFVETADEVLAIALLKQKIKKPFNLEVPEEPKKKDK.

In terms of domain architecture, Lon N-terminal spans 30–225 (LPILPVRNIV…WLLQLMDKDI (196 aa)). 376–383 (GPPGVGKT) is an ATP binding site. Residues 612–793 (DDLAGIVTGL…DEVLAIALLK (182 aa)) enclose the Lon proteolytic domain. Active-site residues include Ser-699 and Lys-742.

This sequence belongs to the peptidase S16 family. In terms of assembly, homohexamer. Organized in a ring with a central cavity.

It localises to the cytoplasm. It catalyses the reaction Hydrolysis of proteins in presence of ATP.. ATP-dependent serine protease that mediates the selective degradation of mutant and abnormal proteins as well as certain short-lived regulatory proteins. Required for cellular homeostasis and for survival from DNA damage and developmental changes induced by stress. Degrades polypeptides processively to yield small peptide fragments that are 5 to 10 amino acids long. Binds to DNA in a double-stranded, site-specific manner. The polypeptide is Lon protease (Cytophaga hutchinsonii (strain ATCC 33406 / DSM 1761 / CIP 103989 / NBRC 15051 / NCIMB 9469 / D465)).